The following is a 124-amino-acid chain: ATP synthase epsilon chain (124 aa).

This sequence belongs to the ATPase epsilon chain family. F-type ATPases have 2 components, CF(1) - the catalytic core - and CF(0) - the membrane proton channel. CF(1) has five subunits: alpha(3), beta(3), gamma(1), delta(1), epsilon(1). CF(0) has three main subunits: a, b and c.

It is found in the cell membrane. Its function is as follows. Produces ATP from ADP in the presence of a proton gradient across the membrane. This Streptomyces griseus subsp. griseus (strain JCM 4626 / CBS 651.72 / NBRC 13350 / KCC S-0626 / ISP 5235) protein is ATP synthase epsilon chain.